The following is a 984-amino-acid chain: MQEHLVVTLDGKDYLVEPGTNLLEFIKSQDTFVPSICYNESMGPIQTCDTCTVEIDGKIERSCSTVIDRPMTVNTVNNDVKDAQKEALDRILEKHMLYCTVCDYNNGDCEIHNTMDAWGLQHQTYEYKEKPYEKDYGPFYRYDPNQCILCGRCVEACQDIELNETIRIDWDREHPRVIWDNDVPINESSCVSCGQCATVCPCNAMMEVNMEGNAGYMTDTEPGSLAAMIDLTKKAEPGYGPLFAISDSEAEMRKERIKKTKTVCTYCGVGCSFEVWTKDREILKVQPSHDSPANKIATCVKGKFSWGHINSDQRLTKPLVRKNGEFHEVEWDEALNVIADNFTSIKEKHGPDALSFISSSKATNEESYLMQKLARQVIGTNNVDNCSRYCQAPATKGLFRTVGHGGDSGSIEDLEKAAMSVLIGTNTAEAHPVIASRMKRAQKLFGQKIHVFDIRKHEMAERADRFYQPKPGTDLAWLSAVTKYIIDHDLHDKAFIEEWVEDFDEYYKSLETFTMAFAEEATGIPEAELIKFAEECAKAESVVICWAMGITQQDIGSDSSTAISNLLLVTGNYRRPGTGAYPLRGHNNVQGCSDIGSMPDKITGYQSIEADDIRAKFEKEYGVKLNPKAGKDNHEMVEGIHDGQIHSLYLYGEDTGIVDSNINFVQAAFEKLDFMVVQDEFLTFTATYADVVLPASPSLEKDGTFTNTERRIQRLYQALKPLGDSKPDWKIFQAIANKLSFDWNYKHPSEIMDEIARLTPLYAGVSYERLEGFNSLQWPVHPDGTDEPILYLEGFNFDNGKAKLFPLSFDNYFKQDEVYDIHVNNGRLLEHFHEGNMTYQTPMLKYKVPRAFVEISPELAEDRGIHEGAEVKLISETGEAVLQVHVTDRVKGKEIYIPLNNDAMENGDLGAINLLTNSDVDQYTDTPSYKRTSCRMEVITKRGKSPLNPNNFRVNKKRHPQYSVQVQKKWERPDYVFPGNQVDK.

A 2Fe-2S ferredoxin-type domain is found at 3–79 (EHLVVTLDGK…PMTVNTVNND (77 aa)). [2Fe-2S] cluster is bound by residues Cys37, Cys48, Cys51, and Cys63. The 4Fe-4S His(Cys)3-ligated-type domain maps to 79–119 (DVKDAQKEALDRILEKHMLYCTVCDYNNGDCEIHNTMDAWG). His95, Cys99, Cys102, Cys109, Cys147, Cys150, Cys153, Cys157, Cys190, Cys193, Cys196, Cys200, Cys264, Cys267, Cys271, and Cys299 together coordinate [4Fe-4S] cluster. 4Fe-4S ferredoxin-type domains lie at 138–165 (PFYR…LNET) and 181–211 (NDVP…VNME). The interval 252 to 984 (MRKERIKKTK…YVFPGNQVDK (733 aa)) is formate dehydrogenase. Positions 257–313 (IKKTKTVCTYCGVGCSFEVWTKDREILKVQPSHDSPANKIATCVKGKFSWGHINSDQ) constitute a 4Fe-4S Mo/W bis-MGD-type domain.

It in the C-terminal section; belongs to the prokaryotic molybdopterin-containing oxidoreductase family. [2Fe-2S] cluster serves as cofactor. The cofactor is [4Fe-4S] cluster. Mo-bis(molybdopterin guanine dinucleotide) is required as a cofactor.

The catalysed reaction is formate + NAD(+) = CO2 + NADH. The sequence is that of Putative formate dehydrogenase SAR2393 from Staphylococcus aureus (strain MRSA252).